Here is a 101-residue protein sequence, read N- to C-terminus: MATAKKINLRPLDDRVVVQPSEAEETTAGGIVLPDSAKEKPQRGTVVAVGPGKLLDSGNRGELSVSVGDVVIYGKYGGSEIEVDGHEMKILRESDILAKIG.

The protein belongs to the GroES chaperonin family. In terms of assembly, heptamer of 7 subunits arranged in a ring. Interacts with the chaperonin GroEL.

The protein localises to the cytoplasm. In terms of biological role, together with the chaperonin GroEL, plays an essential role in assisting protein folding. The GroEL-GroES system forms a nano-cage that allows encapsulation of the non-native substrate proteins and provides a physical environment optimized to promote and accelerate protein folding. GroES binds to the apical surface of the GroEL ring, thereby capping the opening of the GroEL channel. The protein is Co-chaperonin GroES 1 of Rhodopirellula baltica (strain DSM 10527 / NCIMB 13988 / SH1).